Reading from the N-terminus, the 89-residue chain is Small ribosomal subunit protein uS15 (89 aa).

Belongs to the universal ribosomal protein uS15 family. As to quaternary structure, part of the 30S ribosomal subunit. Forms a bridge to the 50S subunit in the 70S ribosome, contacting the 23S rRNA.

Its function is as follows. One of the primary rRNA binding proteins, it binds directly to 16S rRNA where it helps nucleate assembly of the platform of the 30S subunit by binding and bridging several RNA helices of the 16S rRNA. In terms of biological role, forms an intersubunit bridge (bridge B4) with the 23S rRNA of the 50S subunit in the ribosome. This chain is Small ribosomal subunit protein uS15, found in Azotobacter vinelandii (strain DJ / ATCC BAA-1303).